Consider the following 69-residue polypeptide: Cytochrome c oxidase subunit 8A, mitochondrial (69 aa).

A mitochondrion-targeting transit peptide spans 1 to 25 (MSVLTPLLLRGLTGSARRLPVPRAK). The short motif at 2 to 19 (SVLTPLLLRGLTGSARRL) is the SIFI-degron element. The Mitochondrial matrix segment spans residues 26-36 (IHSLPPEGKLG). A helical transmembrane segment spans residues 37-60 (IMELAVGLTSCFVTFLLPAGWILS). The Mitochondrial intermembrane portion of the chain corresponds to 61–69 (HLETYRRPE).

Belongs to the cytochrome c oxidase VIII family. As to quaternary structure, component of the cytochrome c oxidase (complex IV, CIV), a multisubunit enzyme composed of 14 subunits. The complex is composed of a catalytic core of 3 subunits MT-CO1, MT-CO2 and MT-CO3, encoded in the mitochondrial DNA, and 11 supernumerary subunits COX4I1 (or COX4I2), COX5A, COX5B, COX6A1 (or COX6A2), COX6B1 (or COX6B2), COX6C, COX7A2 (or COX7A1), COX7B, COX7C, COX8A and NDUFA4, which are encoded in the nuclear genome. The complex exists as a monomer or a dimer and forms supercomplexes (SCs) in the inner mitochondrial membrane with NADH-ubiquinone oxidoreductase (complex I, CI) and ubiquinol-cytochrome c oxidoreductase (cytochrome b-c1 complex, complex III, CIII), resulting in different assemblies (supercomplex SCI(1)III(2)IV(1) and megacomplex MCI(2)III(2)IV(2)). In terms of processing, in response to mitochondrial stress, the precursor protein is ubiquitinated by the SIFI complex in the cytoplasm before mitochondrial import, leading to its degradation. Within the SIFI complex, UBR4 initiates ubiquitin chain that are further elongated or branched by KCMF1. In terms of tissue distribution, widely expressed.

It is found in the mitochondrion inner membrane. It functions in the pathway energy metabolism; oxidative phosphorylation. Component of the cytochrome c oxidase, the last enzyme in the mitochondrial electron transport chain which drives oxidative phosphorylation. The respiratory chain contains 3 multisubunit complexes succinate dehydrogenase (complex II, CII), ubiquinol-cytochrome c oxidoreductase (cytochrome b-c1 complex, complex III, CIII) and cytochrome c oxidase (complex IV, CIV), that cooperate to transfer electrons derived from NADH and succinate to molecular oxygen, creating an electrochemical gradient over the inner membrane that drives transmembrane transport and the ATP synthase. Cytochrome c oxidase is the component of the respiratory chain that catalyzes the reduction of oxygen to water. Electrons originating from reduced cytochrome c in the intermembrane space (IMS) are transferred via the dinuclear copper A center (CU(A)) of subunit 2 and heme A of subunit 1 to the active site in subunit 1, a binuclear center (BNC) formed by heme A3 and copper B (CU(B)). The BNC reduces molecular oxygen to 2 water molecules using 4 electrons from cytochrome c in the IMS and 4 protons from the mitochondrial matrix. This chain is Cytochrome c oxidase subunit 8A, mitochondrial (COX8A), found in Homo sapiens (Human).